The sequence spans 118 residues: Acidic phospholipase A2 CM-I (118 aa).

7 disulfide bridges follow: C11/C70, C26/C117, C28/C44, C43/C98, C50/C91, C59/C84, and C77/C89. Ca(2+)-binding residues include Y27, G29, and G31. H47 is an active-site residue. D48 is a binding site for Ca(2+). D92 is a catalytic residue.

Belongs to the phospholipase A2 family. Group I subfamily. D49 sub-subfamily. Ca(2+) is required as a cofactor. As to expression, expressed by the venom gland.

It is found in the secreted. It carries out the reaction a 1,2-diacyl-sn-glycero-3-phosphocholine + H2O = a 1-acyl-sn-glycero-3-phosphocholine + a fatty acid + H(+). In terms of biological role, snake venom phospholipase A2 (PLA2) that causes myonecrosis when injected intramuscularly, shows indirect hemolytic activity, abolishes twitches evoked by indirect stimulation earlier than those by direct stimulation (in the mouse phrenic nerve-diaphragm preparation) but does not produce complete neuromuscular block (up to 30 ug/ml) (in the chick biventer cervicis nerve-muscle preparation). PLA2 catalyzes the calcium-dependent hydrolysis of the 2-acyl groups in 3-sn-phosphoglycerides. This is Acidic phospholipase A2 CM-I from Naja mossambica (Mozambique spitting cobra).